The primary structure comprises 410 residues: Cysteine desulfurase IscS (410 aa).

Residues Ala80–Thr81, Asn160, Gln188, and Ser208–His210 each bind pyridoxal 5'-phosphate. Lys211 bears the N6-(pyridoxal phosphate)lysine mark. Residue Thr248 participates in pyridoxal 5'-phosphate binding. Residue Cys334 is the Cysteine persulfide intermediate of the active site. A [2Fe-2S] cluster-binding site is contributed by Cys334.

Belongs to the class-V pyridoxal-phosphate-dependent aminotransferase family. NifS/IscS subfamily. As to quaternary structure, homodimer. Forms a heterotetramer with IscU, interacts with other sulfur acceptors. Pyridoxal 5'-phosphate is required as a cofactor.

It is found in the cytoplasm. It catalyses the reaction (sulfur carrier)-H + L-cysteine = (sulfur carrier)-SH + L-alanine. It functions in the pathway cofactor biosynthesis; iron-sulfur cluster biosynthesis. Master enzyme that delivers sulfur to a number of partners involved in Fe-S cluster assembly, tRNA modification or cofactor biosynthesis. Catalyzes the removal of elemental sulfur atoms from cysteine to produce alanine. Functions as a sulfur delivery protein for Fe-S cluster synthesis onto IscU, an Fe-S scaffold assembly protein, as well as other S acceptor proteins. The polypeptide is Cysteine desulfurase IscS (Rickettsia prowazekii (strain Madrid E)).